Here is a 244-residue protein sequence, read N- to C-terminus: MAGHSKWANIKHRKGANDAKKAKYFGKLIREITAAVKQSGNDIEVNPRLRLAIQNAKGANMPKENIDRAINKGSTADTADFTSVVYEGNASHGVALIVECTTDNLNRTVANVRAAFSKHGGSLGKNGSVSFLFDRKGTFSINAADVKDEEALTLALIEAGAEAIEHDQEEGYYHIISSLEDFGSVQKELDNLHLEPVSASLQYIPQNQVELNEETLSKVMKLIEALEDNDDVQKVYHNIANNTE.

Belongs to the TACO1 family.

The protein localises to the cytoplasm. In Amoebophilus asiaticus (strain 5a2), this protein is Probable transcriptional regulatory protein Aasi_0624.